Consider the following 213-residue polypeptide: Virion protein US10 homolog (213 aa).

The protein belongs to the herpesviridae US10 family. Post-translationally, phosphorylated.

It localises to the virion tegument. The protein localises to the host nucleus matrix. This is Virion protein US10 homolog (US639) from Gallid herpesvirus 2 (strain GA) (GaHV-2).